Consider the following 96-residue polypeptide: Glutamyl-tRNA(Gln) amidotransferase subunit C (96 aa).

It belongs to the GatC family. Heterotrimer of A, B and C subunits.

It catalyses the reaction L-glutamyl-tRNA(Gln) + L-glutamine + ATP + H2O = L-glutaminyl-tRNA(Gln) + L-glutamate + ADP + phosphate + H(+). The catalysed reaction is L-aspartyl-tRNA(Asn) + L-glutamine + ATP + H2O = L-asparaginyl-tRNA(Asn) + L-glutamate + ADP + phosphate + 2 H(+). In terms of biological role, allows the formation of correctly charged Asn-tRNA(Asn) or Gln-tRNA(Gln) through the transamidation of misacylated Asp-tRNA(Asn) or Glu-tRNA(Gln) in organisms which lack either or both of asparaginyl-tRNA or glutaminyl-tRNA synthetases. The reaction takes place in the presence of glutamine and ATP through an activated phospho-Asp-tRNA(Asn) or phospho-Glu-tRNA(Gln). The protein is Glutamyl-tRNA(Gln) amidotransferase subunit C of Pseudomonas aeruginosa (strain ATCC 15692 / DSM 22644 / CIP 104116 / JCM 14847 / LMG 12228 / 1C / PRS 101 / PAO1).